The following is a 97-amino-acid chain: Type 1 phosphatases regulator YPI2 (97 aa).

The disordered stretch occupies residues 1–97 (MNKKKTKICC…KMMEKKSNNT (97 aa)). A compositionally biased stretch (basic and acidic residues) spans 43-53 (ENDKDLGFDER). Positions 54–65 (RKRRVERRRRKL) are enriched in basic residues.

Belongs to the YPI1 family.

It is found in the nucleus. Regulator of type 1 phosphatases which maintains protein phosphatase activity under strict control. This is Type 1 phosphatases regulator YPI2 (YPI2) from Vanderwaltozyma polyspora (strain ATCC 22028 / DSM 70294 / BCRC 21397 / CBS 2163 / NBRC 10782 / NRRL Y-8283 / UCD 57-17) (Kluyveromyces polysporus).